A 299-amino-acid polypeptide reads, in one-letter code: Putative S-adenosyl-L-methionine-dependent methyltransferase MAB_0027c (299 aa).

S-adenosyl-L-methionine is bound by residues aspartate 126 and 155-156 (DL).

Belongs to the UPF0677 family.

Functionally, exhibits S-adenosyl-L-methionine-dependent methyltransferase activity. The sequence is that of Putative S-adenosyl-L-methionine-dependent methyltransferase MAB_0027c from Mycobacteroides abscessus (strain ATCC 19977 / DSM 44196 / CCUG 20993 / CIP 104536 / JCM 13569 / NCTC 13031 / TMC 1543 / L948) (Mycobacterium abscessus).